Here is a 147-residue protein sequence, read N- to C-terminus: Hemoglobin subunit beta (147 aa).

Val2 carries the N-acetylvaline modification. A Globin domain is found at 3–147 (HLTGEEKSAV…VANALAHKYH (145 aa)). Thr13 is modified (phosphothreonine). Ser45 carries the post-translational modification Phosphoserine. N6-acetyllysine is present on Lys60. His64 serves as a coordination point for heme b. Position 83 is an N6-acetyllysine (Lys83). His93 contributes to the heme b binding site. Cys94 carries the post-translational modification S-nitrosocysteine. The residue at position 145 (Lys145) is an N6-acetyllysine.

This sequence belongs to the globin family. In terms of assembly, heterotetramer of two alpha chains and two beta chains. Red blood cells.

Functionally, involved in oxygen transport from the lung to the various peripheral tissues. This Callimico goeldii (Goeldi's marmoset) protein is Hemoglobin subunit beta (HBB).